We begin with the raw amino-acid sequence, 160 residues long: MRVGLFAVGRLKSGPEKDLAARYFDRFAKAGPAVGLELARIAETAESRASNAETRKREEAAILLKSLAEGSVLILLDERGKALDSEAFANLLGAYRDQGKRDLMIAIGGADGLDPALYDRADVTLCLGKMTWPHQLVRTLIAEQLYRAVTILSGHPYHRV.

Residues L76, G108, and 127–132 each bind S-adenosyl-L-methionine; that span reads LGKMTW.

It belongs to the RNA methyltransferase RlmH family. In terms of assembly, homodimer.

The protein localises to the cytoplasm. It catalyses the reaction pseudouridine(1915) in 23S rRNA + S-adenosyl-L-methionine = N(3)-methylpseudouridine(1915) in 23S rRNA + S-adenosyl-L-homocysteine + H(+). Its function is as follows. Specifically methylates the pseudouridine at position 1915 (m3Psi1915) in 23S rRNA. This is Ribosomal RNA large subunit methyltransferase H from Rhizobium etli (strain CIAT 652).